The following is a 145-amino-acid chain: Large-conductance mechanosensitive channel (145 aa).

Transmembrane regions (helical) follow at residues valine 14–leucine 34 and glycine 83–valine 103.

It belongs to the MscL family. As to quaternary structure, homopentamer.

Its subcellular location is the cell inner membrane. Channel that opens in response to stretch forces in the membrane lipid bilayer. May participate in the regulation of osmotic pressure changes within the cell. This Paracoccus denitrificans (strain Pd 1222) protein is Large-conductance mechanosensitive channel.